Here is a 184-residue protein sequence, read N- to C-terminus: ATP synthase subunit b, chloroplastic (184 aa).

A helical transmembrane segment spans residues 27 to 49 (LATNPINLSVVLGVLIFFGKGVL).

Belongs to the ATPase B chain family. As to quaternary structure, F-type ATPases have 2 components, F(1) - the catalytic core - and F(0) - the membrane proton channel. F(1) has five subunits: alpha(3), beta(3), gamma(1), delta(1), epsilon(1). F(0) has four main subunits: a(1), b(1), b'(1) and c(10-14). The alpha and beta chains form an alternating ring which encloses part of the gamma chain. F(1) is attached to F(0) by a central stalk formed by the gamma and epsilon chains, while a peripheral stalk is formed by the delta, b and b' chains.

The protein localises to the plastid. It localises to the chloroplast thylakoid membrane. Functionally, f(1)F(0) ATP synthase produces ATP from ADP in the presence of a proton or sodium gradient. F-type ATPases consist of two structural domains, F(1) containing the extramembraneous catalytic core and F(0) containing the membrane proton channel, linked together by a central stalk and a peripheral stalk. During catalysis, ATP synthesis in the catalytic domain of F(1) is coupled via a rotary mechanism of the central stalk subunits to proton translocation. Its function is as follows. Component of the F(0) channel, it forms part of the peripheral stalk, linking F(1) to F(0). The polypeptide is ATP synthase subunit b, chloroplastic (Phalaenopsis aphrodite subsp. formosana (Moth orchid)).